The primary structure comprises 315 residues: DNA-directed RNA polymerase subunit alpha (315 aa).

The alpha N-terminal domain (alpha-NTD) stretch occupies residues 1-228; it reads MLEIEKPKIE…EHFKLFMTLT (228 aa). Residues 245–315 are alpha C-terminal domain (alpha-CTD); sequence KEKVLEMTIE…LELGLKQSEE (71 aa).

It belongs to the RNA polymerase alpha chain family. Homodimer. The RNAP catalytic core consists of 2 alpha, 1 beta, 1 beta' and 1 omega subunit. When a sigma factor is associated with the core the holoenzyme is formed, which can initiate transcription.

The enzyme catalyses RNA(n) + a ribonucleoside 5'-triphosphate = RNA(n+1) + diphosphate. In terms of biological role, DNA-dependent RNA polymerase catalyzes the transcription of DNA into RNA using the four ribonucleoside triphosphates as substrates. In Clostridium tetani (strain Massachusetts / E88), this protein is DNA-directed RNA polymerase subunit alpha.